A 37-amino-acid chain; its full sequence is Large ribosomal subunit protein bL36 (37 aa).

This sequence belongs to the bacterial ribosomal protein bL36 family.

This chain is Large ribosomal subunit protein bL36, found in Shewanella baltica (strain OS223).